The primary structure comprises 347 residues: MIYPVIWQNNCVLLIDQTRLPNEYAVVEIHRSEEMARAIQTMIVRGAPAIGVAAAYGMYLGAREIETSERQEFLQKLEKVAQLLRATRPTAVNLFWAISRMLKTAYETLGTVAQIKENLLQTAQAINAEDLQTCQVIGDNGLAILPKTPTKLTLLTHCNAGALATAGYGTALGVVRSAWREGRLERLFADETRPRLQGAKLTTWECVQEGIPVTLITDNMAAHCMKQGLIDAVVVGADRIAANGDAANKIGTYSLAIVAKAHNVPFFVAAPVSTIDFELTDGSQIPIEERNPVEIYQVGDTTLTPPGVEFYNPAFDVTPAELITAIITENGAFAPCDLTKSSKQAVV.

Substrate-binding positions include 45–47 (RGA), Arg-88, and Gln-197. The active-site Proton donor is Asp-238. Residue 248–249 (NK) participates in substrate binding.

Belongs to the eIF-2B alpha/beta/delta subunits family. MtnA subfamily.

It carries out the reaction 5-(methylsulfanyl)-alpha-D-ribose 1-phosphate = 5-(methylsulfanyl)-D-ribulose 1-phosphate. It participates in amino-acid biosynthesis; L-methionine biosynthesis via salvage pathway; L-methionine from S-methyl-5-thio-alpha-D-ribose 1-phosphate: step 1/6. Its function is as follows. Catalyzes the interconversion of methylthioribose-1-phosphate (MTR-1-P) into methylthioribulose-1-phosphate (MTRu-1-P). The chain is Methylthioribose-1-phosphate isomerase from Trichormus variabilis (strain ATCC 29413 / PCC 7937) (Anabaena variabilis).